The primary structure comprises 169 residues: Lipoprotein signal peptidase (169 aa).

The next 4 membrane-spanning stretches (helical) occupy residues 15 to 35 (WLWLAIVIFLADIGIKYVVMN), 47 to 67 (ILPFFNLLYVHNYGAAFSFLS), 75 to 95 (WLFTGIAFVVTGLLTYWMSKL), and 107 to 127 (AMIIGGAVGNVFDRVIHGFVV). Catalysis depends on residues Asp128 and Asp146. The helical transmembrane segment at 141–161 (AFNLADMAICLGAAMIILDGF) threads the bilayer.

It belongs to the peptidase A8 family.

The protein resides in the cell inner membrane. The enzyme catalyses Release of signal peptides from bacterial membrane prolipoproteins. Hydrolyzes -Xaa-Yaa-Zaa-|-(S,diacylglyceryl)Cys-, in which Xaa is hydrophobic (preferably Leu), and Yaa (Ala or Ser) and Zaa (Gly or Ala) have small, neutral side chains.. It participates in protein modification; lipoprotein biosynthesis (signal peptide cleavage). Its function is as follows. This protein specifically catalyzes the removal of signal peptides from prolipoproteins. The sequence is that of Lipoprotein signal peptidase from Vibrio parahaemolyticus serotype O3:K6 (strain RIMD 2210633).